The primary structure comprises 329 residues: Protein SPATA31F3 (329 aa).

Residues 11-31 (VGYSVYTYGSIFIIALIIWQV) traverse the membrane as a helical segment. The stretch at 58-85 (SDRATRAKRTSKEEAEKLQKLLDTMKSQ) forms a coiled coil. Disordered regions lie at residues 149 to 184 (ADRS…RSAT), 201 to 250 (QQLD…AAPT), and 288 to 329 (KPMT…KRNI). 2 positions are modified to phosphoserine: S152 and S153. Polar residues-rich tracts occupy residues 154–184 (ELTY…RSAT) and 201–223 (QQLD…SSTD). The span at 232 to 242 (QKKRKKTKKLA) shows a compositional bias: basic residues. Over residues 293-320 (EPEKTHSPVRDQAEGAEKKKKPECDLKA) the composition is skewed to basic and acidic residues.

This sequence belongs to the SPATA31 family.

It localises to the membrane. The polypeptide is Protein SPATA31F3 (Rattus norvegicus (Rat)).